A 184-amino-acid polypeptide reads, in one-letter code: Vacuolar protein sorting-associated protein 68 (184 aa).

Met-1 is subject to N-acetylmethionine. Ser-8 is modified (phosphoserine). The helical transmembrane segment at 26–46 threads the bilayer; that stretch reads GVYLSGALYALGFWIFLDAVL. Asn-52 carries an N-linked (GlcNAc...) asparagine glycan. The next 3 membrane-spanning stretches (helical) occupy residues 56–76, 115–135, and 150–170; these read VHVT…TLIV, LFFG…VLII, and MGVN…VLWI.

The protein belongs to the UPF0220 family.

The protein resides in the vacuole membrane. The protein localises to the mitochondrion. Functionally, involved in vacuolar protein sorting. The polypeptide is Vacuolar protein sorting-associated protein 68 (VPS68) (Saccharomyces cerevisiae (strain ATCC 204508 / S288c) (Baker's yeast)).